We begin with the raw amino-acid sequence, 89 residues long: MSRSLKKGPYINVKLEKRIFAMNESGKKVVVKTWARASMISPDFVGHTVAVHNGNKFIPVYVTENMVGHKLGEFAPTRTFRGHAGNKKR.

The protein belongs to the universal ribosomal protein uS19 family.

Its function is as follows. Protein S19 forms a complex with S13 that binds strongly to the 16S ribosomal RNA. This chain is Small ribosomal subunit protein uS19, found in Bacteroides thetaiotaomicron (strain ATCC 29148 / DSM 2079 / JCM 5827 / CCUG 10774 / NCTC 10582 / VPI-5482 / E50).